The chain runs to 306 residues: uncharacterized protein (306 aa).

The protein to M.jannaschii MJ0658.

This is an uncharacterized protein from Methanothermobacter thermautotrophicus (strain ATCC 29096 / DSM 1053 / JCM 10044 / NBRC 100330 / Delta H) (Methanobacterium thermoautotrophicum).